Here is a 32-residue protein sequence, read N- to C-terminus: Tail virion protein G9P (32 aa).

Residues 4-24 traverse the membrane as a helical segment; that stretch reads LSYFFAAYCIGWVISHSILVF.

It belongs to the inovirus G9P protein family.

It is found in the virion. The protein resides in the host membrane. May initiate with G7P the virion concomitant assembly-budding process, by interacting with the packaging signal of the viral genome. The assembly-budding takes place at the host inner membrane. In turn, G7P and G9P are present at the end of the filamentous virion that emerges first from the bacterial host. The sequence is that of Tail virion protein G9P (IX) from Escherichia phage If1 (Bacteriophage If1).